The following is a 191-amino-acid chain: Large ribosomal subunit protein uL22 (191 aa).

A compositionally biased stretch (basic and acidic residues) spans Val-159–Gln-168. The segment at Val-159–Asp-191 is disordered. Over residues Lys-169–Leu-182 the composition is skewed to basic residues.

It belongs to the universal ribosomal protein uL22 family.

In Suberites domuncula (Sponge), this protein is Large ribosomal subunit protein uL22 (RPL17).